The following is a 1404-amino-acid chain: DNA (cytosine-5)-methyltransferase 3 (1404 aa).

Basic residues predominate over residues 1–10; it reads MKTKAGKQKK. The segment at 1–35 is disordered; the sequence is MKTKAGKQKKRSVDSDDDVSRERRPKRATSGTNFK. Residues 11 to 22 are compositionally biased toward basic and acidic residues; sequence RSVDSDDDVSRE. Lysine 486 participates in a covalent cross-link: Glycyl lysine isopeptide (Lys-Gly) (interchain with G-Cter in ubiquitin). BAH domains lie at 614–748 and 788–929; these read RKMD…FSLP and IKYS…KKLP. The 434-residue stretch at 969–1402 folds into the SAM-dependent MTase C5-type domain; the sequence is LATLDIFAGC…RKLKEALHLR (434 aa). Cysteine 1085 is a catalytic residue.

Belongs to the class I-like SAM-binding methyltransferase superfamily. C5-methyltransferase family.

It is found in the nucleus. It carries out the reaction a 2'-deoxycytidine in DNA + S-adenosyl-L-methionine = a 5-methyl-2'-deoxycytidine in DNA + S-adenosyl-L-homocysteine + H(+). Functionally, maintains chromatin CpG methylation that plays a role in genomic imprinting, regulation of embryogenesis and seed viability. Required for proper patterns of CG DNA methylation in dividing cells. Required during the endosperm development in seeds. The sequence is that of DNA (cytosine-5)-methyltransferase 3 (MET3) from Arabidopsis thaliana (Mouse-ear cress).